Here is an 836-residue protein sequence, read N- to C-terminus: Translation initiation factor IF-2 (836 aa).

Basic residues predominate over residues 1–17; the sequence is MLRLMRQKKLSIQRRTK. Disordered regions lie at residues 1 to 43 and 83 to 240; these read MLRL…RTVK and AAKK…KGAA. The span at 18-27 shows a compositional bias: low complexity; sequence TTVSSTTTGG. Residues 83 to 153 show a composition bias toward basic and acidic residues; it reads AAKKEADEKV…AAEEAKRYAE (71 aa). Residues 154 to 167 are compositionally biased toward acidic residues; sequence ADDSDNESSSEDYS. The segment covering 192–202 has biased composition (basic residues); that stretch reads RGKNKVAKAKK. Residues 203-229 show a composition bias toward basic and acidic residues; sequence GGRDDENSKNSKNERESNRKNQKDAKF. Residues 335–505 enclose the tr-type G domain; the sequence is TRAPVVTIMG…LLQSEVLELT (171 aa). A G1 region spans residues 344–351; sequence GHVDHGKT. 344-351 serves as a coordination point for GTP; sequence GHVDHGKT. Residues 369-373 are G2; that stretch reads GITQH. A G3 region spans residues 391 to 394; that stretch reads DTPG. GTP-binding positions include 391 to 395 and 445 to 448; these read DTPGH and NKID. The segment at 445-448 is G4; the sequence is NKID. The interval 481–483 is G5; it reads SAK.

It belongs to the TRAFAC class translation factor GTPase superfamily. Classic translation factor GTPase family. IF-2 subfamily.

Its subcellular location is the cytoplasm. Functionally, one of the essential components for the initiation of protein synthesis. Protects formylmethionyl-tRNA from spontaneous hydrolysis and promotes its binding to the 30S ribosomal subunits. Also involved in the hydrolysis of GTP during the formation of the 70S ribosomal complex. The protein is Translation initiation factor IF-2 of Haemophilus influenzae (strain PittEE).